Consider the following 509-residue polypeptide: Maturase K (509 aa).

This sequence belongs to the intron maturase 2 family. MatK subfamily.

It is found in the plastid. The protein resides in the chloroplast. Functionally, usually encoded in the trnK tRNA gene intron. Probably assists in splicing its own and other chloroplast group II introns. In Austrocylindropuntia vestita (Cactus), this protein is Maturase K.